A 1008-amino-acid chain; its full sequence is Chitin synthase C (1008 aa).

Residues 1–160 (MIYEMMVMKR…GGRTIDPNNR (160 aa)) form a disordered region. A compositionally biased stretch (low complexity) spans 10–19 (RSANSRAQNN). Residues 34–45 (ESPSRPVSSLGN) show a composition bias toward polar residues. N-linked (GlcNAc...) asparagine glycosylation occurs at Asn-312. 5 helical membrane-spanning segments follow: residues 642–662 (FMQL…FYFI), 682–702 (IFVI…IISM), 717–737 (IIVY…LVVI), 755–775 (LFVN…YASF), and 787–807 (SAAY…YAFC). A glycan (N-linked (GlcNAc...) asparagine) is linked at Asn-833. Helical transmembrane passes span 887-907 (MVSI…EVYG) and 910-930 (AGGT…LALI). N-linked (GlcNAc...) asparagine glycosylation occurs at Asn-961.

This sequence belongs to the chitin synthase family. Class II subfamily.

It localises to the cell membrane. The catalysed reaction is [(1-&gt;4)-N-acetyl-beta-D-glucosaminyl](n) + UDP-N-acetyl-alpha-D-glucosamine = [(1-&gt;4)-N-acetyl-beta-D-glucosaminyl](n+1) + UDP + H(+). Its function is as follows. Polymerizes chitin, a structural polymer of the cell wall and septum, by transferring the sugar moiety of UDP-GlcNAc to the non-reducing end of the growing chitin polymer. Involved in cell wall integrity and mycelial morphology. Plays an important role in septal growth or maintenance. Acts as a positive regulator of conidiation, cellular responses to oxidative stresses, and the production of malic acid. Negatively regulates the citric acid production. This Aspergillus niger (strain ATCC MYA-4892 / CBS 513.88 / FGSC A1513) protein is Chitin synthase C.